Here is a 362-residue protein sequence, read N- to C-terminus: Cobalt-precorrin-5B C(1)-methyltransferase (362 aa).

Belongs to the CbiD family.

The catalysed reaction is Co-precorrin-5B + S-adenosyl-L-methionine = Co-precorrin-6A + S-adenosyl-L-homocysteine. It participates in cofactor biosynthesis; adenosylcobalamin biosynthesis; cob(II)yrinate a,c-diamide from sirohydrochlorin (anaerobic route): step 6/10. In terms of biological role, catalyzes the methylation of C-1 in cobalt-precorrin-5B to form cobalt-precorrin-6A. The chain is Cobalt-precorrin-5B C(1)-methyltransferase from Geobacter sulfurreducens (strain ATCC 51573 / DSM 12127 / PCA).